An 860-amino-acid chain; its full sequence is Probable inorganic carbon transporter subunit DabA (860 aa).

A disordered region spans residues 1-32 (MTTTSLGADAAHTHAMVPSAIPPEGSDAAGPD). Zn(2+)-binding residues include Cys-369, Asp-371, His-551, and Cys-566.

It belongs to the inorganic carbon transporter (TC 9.A.2) DabA family. In terms of assembly, forms a complex with DabB. The cofactor is Zn(2+).

The protein resides in the cell inner membrane. Functionally, part of an energy-coupled inorganic carbon pump. The chain is Probable inorganic carbon transporter subunit DabA from Ralstonia pickettii (strain 12D).